The primary structure comprises 530 residues: MNNARPIRRALISVSDKTGIVEFAQALAERGVDILSTGGTARLLAEKGISVTEVSDYTGFPEMMDGRVKTLHPKVHGGVLGRRGQDDDIMEQHGINPIDMVVVNLYPFAETVAKEGCTLADAVENIDIGGPTMVRSAAKNHKDVTIVVNAHDYDRVIAEMDANEKSLTLETRFDLAIAAFEHTASYDGMIANYFGTMVPSYGENKEGDEESKFPRTFNQQFEKKQDMRYGENSHQAAAFYVEANPEEASVSTARQIQGKALSYNNIADTDAALECVKEFDEPACVIVKHANPCGVALGKDILEAYDRAFKTDPTSAFGGIIAFNRELDAATATAITERQFVEVIIAPSVSTEAVEIVAAKKNLRLLECGEWTTKTTGFDVKRVNGGLLVQDRDQGMVSEDDLQVVSKRQPTAEELKDALFCWKVAKYVKSNAIVYSKGDMTIGVGAGQMSRVYSAKIAGIKAADEGLQVEGCVMASDAFFPFRDGIDAAAEAGIKCVIQPGGSMRDNEVIEAADEHGMAMIFTGMRHFRH.

An MGS-like domain is found at 1–148; sequence MNNARPIRRA…KNHKDVTIVV (148 aa).

It belongs to the PurH family.

The enzyme catalyses (6R)-10-formyltetrahydrofolate + 5-amino-1-(5-phospho-beta-D-ribosyl)imidazole-4-carboxamide = 5-formamido-1-(5-phospho-D-ribosyl)imidazole-4-carboxamide + (6S)-5,6,7,8-tetrahydrofolate. The catalysed reaction is IMP + H2O = 5-formamido-1-(5-phospho-D-ribosyl)imidazole-4-carboxamide. Its pathway is purine metabolism; IMP biosynthesis via de novo pathway; 5-formamido-1-(5-phospho-D-ribosyl)imidazole-4-carboxamide from 5-amino-1-(5-phospho-D-ribosyl)imidazole-4-carboxamide (10-formyl THF route): step 1/1. It participates in purine metabolism; IMP biosynthesis via de novo pathway; IMP from 5-formamido-1-(5-phospho-D-ribosyl)imidazole-4-carboxamide: step 1/1. The sequence is that of Bifunctional purine biosynthesis protein PurH from Aliivibrio fischeri (strain ATCC 700601 / ES114) (Vibrio fischeri).